Reading from the N-terminus, the 113-residue chain is Large ribosomal subunit protein uL22 (113 aa).

The protein belongs to the universal ribosomal protein uL22 family. As to quaternary structure, part of the 50S ribosomal subunit.

In terms of biological role, this protein binds specifically to 23S rRNA; its binding is stimulated by other ribosomal proteins, e.g. L4, L17, and L20. It is important during the early stages of 50S assembly. It makes multiple contacts with different domains of the 23S rRNA in the assembled 50S subunit and ribosome. Its function is as follows. The globular domain of the protein is located near the polypeptide exit tunnel on the outside of the subunit, while an extended beta-hairpin is found that lines the wall of the exit tunnel in the center of the 70S ribosome. The protein is Large ribosomal subunit protein uL22 of Bacillus cytotoxicus (strain DSM 22905 / CIP 110041 / 391-98 / NVH 391-98).